A 915-amino-acid chain; its full sequence is Translation initiation factor IF-2 (915 aa).

Disordered stretches follow at residues 1–105 (MSEG…RALT) and 121–295 (VEAA…RAAI). The segment covering 57–81 (PGTPSAPEGGSSSAPAPQSGNAPQG) has biased composition (low complexity). Gly residues predominate over residues 84–101 (RSGGGNRGSGRGGAGGAG). Composition is skewed to basic and acidic residues over residues 121–135 (VEAA…EQEK) and 143–180 (EEAR…RKAA). The span at 186 to 195 (AEAPPVPPPA) shows a compositional bias: pro residues. Low complexity-rich tracts occupy residues 201–213 (AAPS…SRTA) and 230–239 (KVPVAAPSAP). The span at 243–256 (RLRERGDEGEEERK) shows a compositional bias: basic and acidic residues. Low complexity predominate over residues 266 to 278 (PAPRKAAAPVAKK). The segment covering 279–295 (AVAEPRRGGRIDVRAAI) has biased composition (basic and acidic residues). Positions 414-584 (PRPPVVTVMG…LLQAEVLDLK (171 aa)) constitute a tr-type G domain. Residues 423-430 (GHVDHGKT) are G1. Residue 423–430 (GHVDHGKT) participates in GTP binding. Residues 448 to 452 (GITQH) form a G2 region. Residues 470 to 473 (DTPG) form a G3 region. Residues 470–474 (DTPGH) and 524–527 (NKCD) each bind GTP. The segment at 524–527 (NKCD) is G4. A G5 region spans residues 560 to 562 (SAL).

It belongs to the TRAFAC class translation factor GTPase superfamily. Classic translation factor GTPase family. IF-2 subfamily.

It localises to the cytoplasm. One of the essential components for the initiation of protein synthesis. Protects formylmethionyl-tRNA from spontaneous hydrolysis and promotes its binding to the 30S ribosomal subunits. Also involved in the hydrolysis of GTP during the formation of the 70S ribosomal complex. The protein is Translation initiation factor IF-2 of Granulibacter bethesdensis (strain ATCC BAA-1260 / CGDNIH1).